The chain runs to 142 residues: Small ribosomal subunit protein uS12 (142 aa).

The segment at 1-30 is disordered; that stretch reads MGKTRGMGAARKLKNHRRRQRWADKSYKKS. Residues 11 to 20 show a composition bias toward basic residues; it reads RKLKNHRRRQ. Residues 21 to 30 are compositionally biased toward basic and acidic residues; that stretch reads RWADKSYKKS. At P61 the chain carries Hydroxyproline.

The protein belongs to the universal ribosomal protein uS12 family.

The polypeptide is Small ribosomal subunit protein uS12 (RPS23) (Fragaria ananassa (Strawberry)).